Here is a 193-residue protein sequence, read N- to C-terminus: MVSKIMNKKYEKGLSLIESAMVLALAATVTAGVMFYYQSASDSNKSQNAISEVMSATSAINGLYIGQTSYSGLDSTILLNTSAIPDNYKDTTNKKITNPFGGELNVGPANNNTAFGYYLTLTRLDKAACVSLATLNLGTSAKGYGVNISSENNITSFGNSADQAAKSTAITPAEAATACKNTDSTNKVTYFMK.

A propeptide spanning residues 1-13 (MVSKIMNKKYEKG) is cleaved from the precursor. L14 carries the N-methylleucine modification. A helical transmembrane segment spans residues 14 to 35 (LSLIESAMVLALAATVTAGVMF). C129 and C179 are disulfide-bonded.

Belongs to the N-Me-Phe pilin family. As to quaternary structure, 10 to 100 laterally aligned filaments or bundle-forming pili coalesce into rope-like bundles. These form linkages between the bacteria within the enteropathogenic E.coli (EPEC) microcolonies that are attached to epithelial cells.

It is found in the fimbrium. It localises to the membrane. Its function is as follows. Major repeating bundle-forming pilus (BFP) subunit. Is required for EPEC localized adherence. This Escherichia coli O111:H- protein is Major structural subunit of bundle-forming pilus (bfpA).